The sequence spans 433 residues: N-lysine methyltransferase SMYD2 (433 aa).

The SET domain occupies 7–241; the sequence is GGLERFCSPG…PGEEVFTSYI (235 aa). Position 17–19 (17–19) interacts with S-adenosyl-L-methionine; the sequence is KGR. The Zn(2+) site is built by Cys52, Cys55, Cys65, Cys68, Cys74, Cys78, His86, and Cys90. The MYND-type zinc-finger motif lies at 52 to 90; sequence CEYCFTRKEGLSKCGRCKQAFYCNVECQKEDWPMHKLEC. S-adenosyl-L-methionine-binding positions include His137, 206 to 207, and 258 to 260; these read NH and YFF. Ser283 is subject to Phosphoserine.

Belongs to the class V-like SAM-binding methyltransferase superfamily. As to quaternary structure, interacts with RNA polymerase II and HELZ. Interacts with SIN3A and HDAC1. Interacts (via MYND-type zinc finger) with EPB41L3. Interacts (via SET domain) with p53/TP53. Interacts with RB1 and HSP90AA1.

The protein resides in the cytoplasm. Its subcellular location is the cytosol. It localises to the nucleus. The catalysed reaction is L-lysyl(4)-[histone H3] + 3 S-adenosyl-L-methionine = N(6),N(6),N(6)-trimethyl-L-lysyl(4)-[histone H3] + 3 S-adenosyl-L-homocysteine + 3 H(+). It carries out the reaction L-lysyl-[protein] + S-adenosyl-L-methionine = N(6)-methyl-L-lysyl-[protein] + S-adenosyl-L-homocysteine + H(+). Protein-lysine N-methyltransferase that methylates both histones and non-histone proteins, including p53/TP53 and RB1. Specifically trimethylates histone H3 'Lys-4' (H3K4me3) in vivo. The activity requires interaction with HSP90alpha. Shows even higher methyltransferase activity on p53/TP53. Monomethylates 'Lys-370' of p53/TP53, leading to decreased DNA-binding activity and subsequent transcriptional regulation activity of p53/TP53. Monomethylates RB1 at 'Lys-860'. The chain is N-lysine methyltransferase SMYD2 (SMYD2) from Homo sapiens (Human).